Here is a 106-residue protein sequence, read N- to C-terminus: ATP-dependent Clp protease adapter protein ClpS (106 aa).

Positions 1 to 14 are enriched in basic and acidic residues; it reads MTDKAGDWQEHGPQ. The segment at 1–21 is disordered; that stretch reads MTDKAGDWQEHGPQVEEAPPQ.

This sequence belongs to the ClpS family. Binds to the N-terminal domain of the chaperone ClpA.

In terms of biological role, involved in the modulation of the specificity of the ClpAP-mediated ATP-dependent protein degradation. The polypeptide is ATP-dependent Clp protease adapter protein ClpS (Alkalilimnicola ehrlichii (strain ATCC BAA-1101 / DSM 17681 / MLHE-1)).